The chain runs to 2442 residues: CREB-binding protein (2442 aa).

2 disordered regions span residues 1–41 and 74–179; these read MAEN…NDLP and LRGG…CMNA. An N-acetylalanine modification is found at Ala2. The span at 20 to 30 shows a compositional bias: polar residues; that stretch reads PGFSANDSTDF. The segment covering 80-90 has biased composition (low complexity); sequence SSINPGIGNVS. Ser121 is subject to Phosphoserine. Residues 122 to 131 are compositionally biased toward polar residues; sequence PLSQGDSSAP. Ser124 bears the Phosphoserine; by ATM mark. The span at 136–150 shows a compositional bias: low complexity; it reads QAASTSGPTPAASQA. Positions 151-172 are enriched in polar residues; that stretch reads LNPQAQKQVGLATSSPATSQTG. Arg220 is modified (omega-N-methylarginine). An interaction with SRCAP region spans residues 227 to 410; that stretch reads PTPAMQGASS…GKACQVAHCA (184 aa). Residues 266-290 are disordered; the sequence is KMGITGNTSPFGQPFSQAGGQPMGA. The span at 270 to 284 shows a compositional bias: polar residues; it reads TGNTSPFGQPFSQAG. The segment at 347 to 433 adopts a TAZ-type 1 zinc-finger fold; sequence DPEKRKLIQQ…RHDCPVCLPL (87 aa). Zn(2+)-binding residues include His363, Cys367, Cys380, Cys385, His394, Cys398, Cys404, Cys409, His418, Cys422, Cys427, and Cys430. A KIX domain is found at 587-666; sequence GVRKGWHEHV…KIYKIQKELE (80 aa). 2 positions are modified to asymmetric dimethylarginine: Arg601 and Arg625. Lys657 carries the N6-acetyllysine modification. Composition is skewed to polar residues over residues 794–805 and 814–823; these read LPQNQFPSSSGA and PAQTGVSQGQ. The segment at 794–1083 is disordered; it reads LPQNQFPSSS…STSPSQPRKK (290 aa). Pro residues-rich tracts occupy residues 844 to 860 and 876 to 885; these read PCPP…PPPA and GMTPPQPAAP. Low complexity-rich tracts occupy residues 886–929 and 937–952; these read TQPS…VTPQ and PSVA…PTPV. The segment covering 973–988 has biased composition (polar residues); that stretch reads PTPSSVASAETNSQQP. Residue Lys998 forms a Glycyl lysine isopeptide (Lys-Gly) (interchain with G-Cter in SUMO1) linkage. A compositionally biased stretch (basic and acidic residues) spans 1011-1021; it reads GESKGEPRSEM. The residue at position 1014 (Lys1014) is an N6-acetyllysine. Ser1030 is modified (phosphoserine). A compositionally biased stretch (basic and acidic residues) spans 1032-1059; the sequence is VKEETDIAEQKSEPMEVDEKKPEVKVEV. Residues Lys1033 and Lys1056 each participate in a glycyl lysine isopeptide (Lys-Gly) (interchain with G-Cter in SUMO1) cross-link. Residues 1066 to 1078 are compositionally biased toward low complexity; sequence SSNGTASQSTSPS. Ser1076 is modified (phosphoserine). The Bromo domain maps to 1085–1192; the sequence is FKPEELRQAL…EVFEQEIDPV (108 aa). The tract at residues 1124–1170 is interaction with histone; the sequence is DYFDIVKNPMDLSTIKRKLDTGQYQEPWQYVDDVWLMFNNAWLYNRK. An interaction with ASF1A region spans residues 1162-1180; that stretch reads NNAWLYNRKTSRVYKFCSK. Residue Lys1216 is modified to N6-acetyllysine. Residues 1323–1700 form the CBP/p300-type HAT domain; that stretch reads KFSAKRLQTT…MLVELHTQGQ (378 aa). Ser1382 and Ser1386 each carry phosphoserine; by IKKA. Residues 1433 to 1435 are interaction with histone; that stretch reads YLD. Acetyl-CoA-binding positions include 1434-1436, 1446-1447, Ile1493, Arg1498, and Trp1502; these read LDS and RT. An interaction with TRERF1 region spans residues 1460–1891; the sequence is YVKKLGYVTG…LPSPTSAPPG (432 aa). Residues 1556–1568 show a composition bias toward basic and acidic residues; the sequence is LEQEEEERKKEES. Residues 1556–1615 form a disordered region; it reads LEQEEEERKKEESTAASETTEGSQGDSKNAKKKNNKKTNKNKSSISRANKKKPSMPNVSN. N6-acetyllysine occurs at positions 1583, 1591, 1592, 1595, and 1597. Over residues 1585-1595 the composition is skewed to basic residues; the sequence is AKKKNNKKTNK. The segment at 1702 to 1750 adopts a ZZ-type zinc-finger fold; the sequence is RFVYTCNECKHHVETRWHCTVCEDYDLCINCYNTKSHAHKMVKWGLGLD. Zn(2+) contacts are provided by Cys1707, Cys1710, Cys1720, Cys1723, Cys1729, Cys1732, His1738, and His1740. 2 positions are modified to N6-acetyllysine: Lys1741 and Lys1744. Ser1763 is subject to Phosphoserine. Residues 1765–1846 form a TAZ-type 2 zinc finger; it reads QESRRLSIQR…KCPVPFCLNI (82 aa). 2 disordered regions span residues 1874 to 1959 and 1977 to 2028; these read TRNV…VEAA and INNS…PLPQ. The segment covering 1900 to 1912 has biased composition (pro residues); it reads PQTPQPPAQPQPS. The span at 1925–1940 shows a compositional bias: polar residues; sequence ARTQPPTTVSTGKPTS. Residues 1943 to 1954 show a composition bias toward pro residues; sequence PAPPPPAQPPPA. A compositionally biased stretch (low complexity) spans 2018–2027; sequence PGQWQQAPLP. A phosphoserine mark is found at Ser2063, Ser2076, and Ser2079. Low complexity-rich tracts occupy residues 2112–2137, 2146–2160, 2196–2219, 2228–2263, and 2294–2305; these read QPGM…HQQP, QAGV…QQQA, QLLQ…QGSA, HGQF…SMGQ, and RILQQQQMKQQI. 2 disordered regions span residues 2112–2263 and 2294–2433; these read QPGM…SMGQ and RILQ…TTGD. Composition is skewed to polar residues over residues 2315 to 2327 and 2334 to 2343; these read SPQQ…QPQA and QIATSLSNQV. The span at 2349–2372 shows a compositional bias: pro residues; the sequence is VQSPRPQSQPPHSSPSPRIQPQPS. The residue at position 2351 (Ser2351) is a Phosphoserine. Over residues 2411–2424 the composition is skewed to polar residues; it reads QLNTPSRSALSSEL.

In terms of assembly, found in a complex containing NCOA2; NCOA3; IKKA; IKKB and IKBKG. Probably part of a complex with HIF1A and EP300. Interacts with GATA1; the interaction results in acetylation and enhancement of transcriptional activity of GATA1. Interacts with MAF and ZCCHC12. Interacts with DAXX; the interaction is dependent on CBP sumoylation and results in suppression of the transcriptional activity via recruitment of HDAC2 to DAXX. Interacts with phosphorylated CREB1. Interacts with CITED4 (C-terminal region). Interacts (via the TAZ-type 1 domain) with HIF1A. Interacts with SRCAP, CARM1, ELF3, MLLT7/FOXO4, N4BP2, NCOA1, NCOA3, NCOA6, PCAF, DDX5, DDX17, PELP1, PML, SMAD1, SMAD2, SMAD3, SPIB and TRERF1. Interacts with KLF1; the interaction results in acetylation of KLF1 and enhancement of its transcriptional activity. Interacts with MTDH. Interacts with NFATC4. Interacts with MAFG; the interaction acetylates MAFG in the basic region and stimulates NFE2 transcriptional activity through increasing its DNA-binding activity. Interacts with IRF2; the interaction acetylates IRF2 and regulates its activity on the H4 promoter. Interacts with IRF3 (when phosphorylated); forming the dsRNA-activated factor 1 (DRAF1), a complex which activates the transcription of the type I interferon genes. Interacts (via N-terminus) with SS18L1/CREST (via C-terminus). Interacts with MECOM. Interacts with CITED1 (via C-terminus). Interacts with FOXO1; the interaction acetylates FOXO1 and inhibits its transcriptional activity. Interacts with NPAS2, CLOCK and BMAL1. Interacts with ASF1A and ASF1B; this promotes histone acetylation. Interacts with acetylated TP53/p53 and with the acetylated histones H3 and H4. Interacts (via transactivation domain and C-terminus) with PCNA; the interaction occurs on chromatin in UV-irradiated damaged cells. Interacts with DHX9 (via N-terminus); this interaction mediates association with RNA polymerase II holoenzyme and stimulates CREB-dependent transcriptional activation. Interacts with SMAD4; negatively regulated by ZBTB7A. Interacts with DUX4 (via C-terminus). Forms a complex with KMT2A and CREB1. Interacts with DDX3X; this interaction may facilitate HNF4A acetylation. Interacts with MSX1; the interaction may inhibit MSX1 autoinactivation. Interacts with ACSS2. (Microbial infection) Interacts with HTLV-1 Tax, p30II and HBZ. As to quaternary structure, (Microbial infection) Interacts with human herpes virus 8/HHV-8 protein vIRF-1; this interaction inhibits CREBBP binding to IRF3. In terms of assembly, (Microbial infection) Interacts with HIV-1 Tat. Methylation of the KIX domain by CARM1 blocks association with CREB. This results in the blockade of CREB signaling, and in activation of apoptotic response. In terms of processing, phosphorylated by CHUK/IKKA at Ser-1382 and Ser-1386; these phosphorylations promote cell growth by switching the binding preference of CREBBP from TP53 to NF-kappa-B. Phosphorylated by _ at Ser-124 in response to DNA damage, promoting interaction with MRE11 and lactylation of MRE11. Post-translationally, sumoylation negatively regulates transcriptional activity via the recruitment of DAAX. Autoacetylation is required for binding to protein substrates, such as acetylated histones and acetylated TP53/p53. Autoacetylation is induced by glucose and fatty acids.

Its subcellular location is the cytoplasm. It localises to the nucleus. It catalyses the reaction L-lysyl-[histone] + acetyl-CoA = N(6)-acetyl-L-lysyl-[histone] + CoA + H(+). The catalysed reaction is L-lysyl-[protein] + acetyl-CoA = N(6)-acetyl-L-lysyl-[protein] + CoA + H(+). The enzyme catalyses (S)-lactoyl-CoA + L-lysyl-[protein] = N(6)-[(S)-lactoyl]-L-lysyl-[protein] + CoA + H(+). Acetylates histones, giving a specific tag for transcriptional activation. Mediates acetylation of histone H3 at 'Lys-18' and 'Lys-27' (H3K18ac and H3K27ac, respectively). Also acetylates non-histone proteins, like DDX21, FBL, IRF2, MAFG, NCOA3, POLR1E/PAF53 and FOXO1. Binds specifically to phosphorylated CREB and enhances its transcriptional activity toward cAMP-responsive genes. Acts as a coactivator of ALX1. Acts as a circadian transcriptional coactivator which enhances the activity of the circadian transcriptional activators: NPAS2-BMAL1 and CLOCK-BMAL1 heterodimers. Acetylates PCNA; acetylation promotes removal of chromatin-bound PCNA and its degradation during nucleotide excision repair (NER). Acetylates POLR1E/PAF53, leading to decreased association of RNA polymerase I with the rDNA promoter region and coding region. Acetylates DDX21, thereby inhibiting DDX21 helicase activity. Acetylates FBL, preventing methylation of 'Gln-105' of histone H2A (H2AQ104me). In addition to protein acetyltransferase, can use different acyl-CoA substrates, such as lactoyl-CoA, and is able to mediate protein lactylation. Catalyzes lactylation of MRE11 in response to DNA damage, thereby promoting DNA double-strand breaks (DSBs) via homologous recombination (HR). Functions as a transcriptional coactivator for SMAD4 in the TGF-beta signaling pathway. This chain is CREB-binding protein, found in Homo sapiens (Human).